The following is a 654-amino-acid chain: Translation factor GUF1, mitochondrial (654 aa).

In terms of domain architecture, tr-type G spans 57-237 (ENYRNFSIVA…SVIKNIPSPV (181 aa)). Residues 66–73 (AHVDHGKS), 130–134 (DTPGH), and 184–187 (NKID) contribute to the GTP site.

Belongs to the TRAFAC class translation factor GTPase superfamily. Classic translation factor GTPase family. LepA subfamily.

The protein localises to the mitochondrion inner membrane. The enzyme catalyses GTP + H2O = GDP + phosphate + H(+). Promotes mitochondrial protein synthesis. May act as a fidelity factor of the translation reaction, by catalyzing a one-codon backward translocation of tRNAs on improperly translocated ribosomes. Binds to mitochondrial ribosomes in a GTP-dependent manner. This Candida albicans (strain WO-1) (Yeast) protein is Translation factor GUF1, mitochondrial.